Consider the following 184-residue polypeptide: Photosystem I assembly protein Ycf4 (184 aa).

2 helical membrane passes run 25–45 (ACIL…SYLG) and 57–77 (ILFV…LFIS).

The protein belongs to the Ycf4 family.

It is found in the plastid. The protein localises to the chloroplast thylakoid membrane. In terms of biological role, seems to be required for the assembly of the photosystem I complex. In Cycas taitungensis (Prince sago), this protein is Photosystem I assembly protein Ycf4.